Reading from the N-terminus, the 357-residue chain is Protein BIG GRAIN 1-like A (357 aa).

2 disordered regions span residues 1 to 146 (MEIT…KELG) and 208 to 233 (SSTC…GKSK). The span at 75–87 (DFERSRRKTDFLR) shows a compositional bias: basic and acidic residues. 2 stretches are compositionally biased toward low complexity: residues 88–104 (HSNS…SSES) and 112–127 (KSSA…QPKP). Residues 129–139 (RTSSVDHSSAV) are compositionally biased toward polar residues. The span at 208–223 (SSTCSSASSFSRSCLS) shows a compositional bias: low complexity.

This sequence belongs to the BIG GRAIN 1 (BG1) plant protein family.

It is found in the cell membrane. In terms of biological role, involved in auxin transport. Regulator of the auxin signaling pathway. The polypeptide is Protein BIG GRAIN 1-like A (Arabidopsis thaliana (Mouse-ear cress)).